Consider the following 158-residue polypeptide: 2S seed storage albumin protein (158 aa).

An N-terminal signal peptide occupies residues 1-21 (MTKFTILLISLLFCIAHTCSA). The short motif at 54-56 (RGD) is the Cell attachment site element. Positions 65-81 (NHILRTMRGRINYIRRN) are excised as a propeptide.

This sequence belongs to the 2S seed storage albumins family. The protein consists of two chains linked by 2 disulfide bonds. As to expression, expressed in cotyledons. Maximal expression in parenchyma cells undergoing DNA endoreduplication and cell expansion but not in actively dividing cells of the cotyledon.

Functionally, this is a 2S seed storage protein. In terms of biological role, binds to mammalian chromatin, preventing the normal formation of the kinetochore complex in the centromere and leading to the disruption of mitosis. The chain is 2S seed storage albumin protein from Glycine max (Soybean).